Consider the following 432-residue polypeptide: Adenylosuccinate synthetase (432 aa).

GTP is bound by residues 13–19 (GDEGKGK) and 41–43 (GHT). Catalysis depends on aspartate 14, which acts as the Proton acceptor. Mg(2+) contacts are provided by aspartate 14 and glycine 41. IMP-binding positions include 14–17 (DEGK), 39–42 (NAGH), threonine 130, arginine 144, glutamine 225, threonine 240, and arginine 304. The active-site Proton donor is histidine 42. Residue 300–306 (ATTGRSR) coordinates substrate. GTP is bound by residues arginine 306, 332–334 (KLD), and 415–417 (STG).

The protein belongs to the adenylosuccinate synthetase family. In terms of assembly, homodimer. Mg(2+) serves as cofactor.

The protein resides in the cytoplasm. It catalyses the reaction IMP + L-aspartate + GTP = N(6)-(1,2-dicarboxyethyl)-AMP + GDP + phosphate + 2 H(+). It participates in purine metabolism; AMP biosynthesis via de novo pathway; AMP from IMP: step 1/2. Plays an important role in the de novo pathway of purine nucleotide biosynthesis. Catalyzes the first committed step in the biosynthesis of AMP from IMP. This is Adenylosuccinate synthetase from Marinomonas sp. (strain MWYL1).